The chain runs to 300 residues: Fatty acid hydroxylase uhd1 (300 aa).

Residues glycine 14–glycine 20, arginine 39, aspartate 63–leucine 64, valine 83–serine 85, tyrosine 156, lysine 160, proline 183–isoleucine 186, and serine 199 contribute to the NADP(+) site. Lysine 160 functions as the Proton donor in the catalytic mechanism.

The protein belongs to the NAD(P)-dependent epimerase/dehydratase family. Dihydroflavonol-4-reductase subfamily.

It functions in the pathway secondary metabolite biosynthesis. Functionally, fatty acid hydroxylase; part of the gene cluster that mediates the biosynthesis of the glycolipid biosurfactant ustilagic acid (UA). UA is a secreted cellobiose glycolipid that is toxic for many microorganisms and confers biocontrol activity to U.maydis. UA consists of 15,16-dihydroxypalmitic or 2,15,16-trihydroxypalmitic acid, which is O-glycosidically linked to cellobiose at its terminal hydroxyl group. In addition, the cellobiose moiety is acetylated and acylated with a short-chain hydroxy fatty acid. UA biosynthesis starts with omega-hydroxylation of palmitic acid catalyzed by the cytochrome P450 monooxygenase cyp1. Terminal hydroxylation of palmitic acid precedes subterminal hydroxylation catalyzed by the cytochrome P450 monooxygenase cyp2. Sequential glucosylation of the hydroxy fatty acid is probably catalyzed by the glycosyltransferase ugt1. The cellobiose lipid is further decorated by acetylation of the proximal glucose residue and by acylation with a short-chain beta-hydroxy fatty acid at the distal glucose residue. The acyltransferase uat1 may be a good candidate for catalyzing either acetylation or acylation of the cellobiose lipid. The fatty acid synthase fas2 may be involved in synthesis of the carbon backbone of the short-chain beta-hydroxy fatty acid esterified to the cellobiose disaccharide. The secreted UA consists of a mixture of both alpha-hydroxylated and non-hydroxylated glycolipids; therefore, alpha-hydroxylation of the long-chain fatty, catalyzed by the fatty acid hydroxylase ahd1, occurs late in UA biosynthesis and may be the last step before secretion. This Mycosarcoma maydis (Corn smut fungus) protein is Fatty acid hydroxylase uhd1.